Here is a 234-residue protein sequence, read N- to C-terminus: Ion-translocating oxidoreductase complex subunit E (234 aa).

Transmembrane regions (helical) follow at residues 62–82 (LGLG…ISLF), 92–112 (IPIY…LMNA), 116–136 (TLYQ…IIIG), 151–171 (IWDG…LGAL), and 205–225 (SFLL…LLAI).

It belongs to the NqrDE/RnfAE family. In terms of assembly, the complex is composed of six subunits: RnfA, RnfB, RnfC, RnfD, RnfE and RnfG.

It localises to the cell inner membrane. Its function is as follows. Part of a membrane-bound complex that couples electron transfer with translocation of ions across the membrane. The sequence is that of Ion-translocating oxidoreductase complex subunit E from Haemophilus influenzae (strain PittGG).